Consider the following 421-residue polypeptide: MHDAVTRPTPPADATAWPRRITQAVKIGGVTVGGGHPVVVQSMTNTDTADIAGSVKQVADLWRAGSEMVRLTVNNAESAAAIPRIVDKLRMMGIDVPLIGDFHYNGHQLLAAEPACAEALAKYRINPGNVGFGKKKDLQFGQLIECAIKYDKPVRIGANWGSLDQSLAAQLMDENAQRETPWDAGRVLREALIRSALDSAERAVELGLPRERIILSAKVSGVQELIAVYRDMASRCDFALHLGLTEAGIGSKGIVASAAALSVLLQEGIGDTIRISLTPEPGQSRTHEVIVAQELLQTTGQRAFTPMVTACPGCGRTTSEFFQELAGVVQNHVRAKMPEWKITNPGAENMTLAVMGCVVNGPGESRHANIGISLPGTGEAPSAPVFIDGEKSVILRGENIAQEFIGLIDQYVERTYARRAG.

4 residues coordinate [4Fe-4S] cluster: Cys311, Cys314, Cys357, and Glu364.

It belongs to the IspG family. [4Fe-4S] cluster serves as cofactor.

The catalysed reaction is (2E)-4-hydroxy-3-methylbut-2-enyl diphosphate + oxidized [flavodoxin] + H2O + 2 H(+) = 2-C-methyl-D-erythritol 2,4-cyclic diphosphate + reduced [flavodoxin]. The protein operates within isoprenoid biosynthesis; isopentenyl diphosphate biosynthesis via DXP pathway; isopentenyl diphosphate from 1-deoxy-D-xylulose 5-phosphate: step 5/6. Converts 2C-methyl-D-erythritol 2,4-cyclodiphosphate (ME-2,4cPP) into 1-hydroxy-2-methyl-2-(E)-butenyl 4-diphosphate. The sequence is that of 4-hydroxy-3-methylbut-2-en-1-yl diphosphate synthase (flavodoxin) from Xanthomonas oryzae pv. oryzae (strain MAFF 311018).